A 634-amino-acid polypeptide reads, in one-letter code: Glutamyl-tRNA(Gln) amidotransferase subunit E (634 aa).

Belongs to the GatB/GatE family. GatE subfamily. As to quaternary structure, heterodimer of GatD and GatE.

It catalyses the reaction L-glutamyl-tRNA(Gln) + L-glutamine + ATP + H2O = L-glutaminyl-tRNA(Gln) + L-glutamate + ADP + phosphate + H(+). Functionally, allows the formation of correctly charged Gln-tRNA(Gln) through the transamidation of misacylated Glu-tRNA(Gln) in organisms which lack glutaminyl-tRNA synthetase. The reaction takes place in the presence of glutamine and ATP through an activated gamma-phospho-Glu-tRNA(Gln). The GatDE system is specific for glutamate and does not act on aspartate. This is Glutamyl-tRNA(Gln) amidotransferase subunit E from Sulfolobus acidocaldarius (strain ATCC 33909 / DSM 639 / JCM 8929 / NBRC 15157 / NCIMB 11770).